The sequence spans 259 residues: Ribosomal RNA small subunit methyltransferase A (259 aa).

S-adenosyl-L-methionine is bound by residues N12, L14, G39, E60, D84, and N102.

It belongs to the class I-like SAM-binding methyltransferase superfamily. rRNA adenine N(6)-methyltransferase family. RsmA subfamily.

The protein localises to the cytoplasm. The enzyme catalyses adenosine(1518)/adenosine(1519) in 16S rRNA + 4 S-adenosyl-L-methionine = N(6)-dimethyladenosine(1518)/N(6)-dimethyladenosine(1519) in 16S rRNA + 4 S-adenosyl-L-homocysteine + 4 H(+). In terms of biological role, specifically dimethylates two adjacent adenosines (A1518 and A1519) in the loop of a conserved hairpin near the 3'-end of 16S rRNA in the 30S particle. May play a critical role in biogenesis of 30S subunits. The protein is Ribosomal RNA small subunit methyltransferase A of Nitrosospira multiformis (strain ATCC 25196 / NCIMB 11849 / C 71).